The following is a 159-amino-acid chain: 2-C-methyl-D-erythritol 2,4-cyclodiphosphate synthase (159 aa).

D8 and H10 together coordinate a divalent metal cation. Residues 8 to 10 (DVH) and 34 to 35 (HS) contribute to the 4-CDP-2-C-methyl-D-erythritol 2-phosphate site. Position 42 (H42) interacts with a divalent metal cation. 4-CDP-2-C-methyl-D-erythritol 2-phosphate is bound by residues 56–58 (DIG), 61–65 (FPDTD), 100–106 (AQAPKML), 132–135 (TTTE), F139, and R142.

Belongs to the IspF family. In terms of assembly, homotrimer. Requires a divalent metal cation as cofactor.

It carries out the reaction 4-CDP-2-C-methyl-D-erythritol 2-phosphate = 2-C-methyl-D-erythritol 2,4-cyclic diphosphate + CMP. It functions in the pathway isoprenoid biosynthesis; isopentenyl diphosphate biosynthesis via DXP pathway; isopentenyl diphosphate from 1-deoxy-D-xylulose 5-phosphate: step 4/6. Involved in the biosynthesis of isopentenyl diphosphate (IPP) and dimethylallyl diphosphate (DMAPP), two major building blocks of isoprenoid compounds. Catalyzes the conversion of 4-diphosphocytidyl-2-C-methyl-D-erythritol 2-phosphate (CDP-ME2P) to 2-C-methyl-D-erythritol 2,4-cyclodiphosphate (ME-CPP) with a corresponding release of cytidine 5-monophosphate (CMP). This Escherichia coli O127:H6 (strain E2348/69 / EPEC) protein is 2-C-methyl-D-erythritol 2,4-cyclodiphosphate synthase.